The sequence spans 400 residues: Argininosuccinate synthase (400 aa).

8–16 (AYSGGLDTS) lines the ATP pocket. Tyr-87 contributes to the L-citrulline binding site. An ATP-binding site is contributed by Gly-117. Residues Thr-119, Asn-123, and Asp-124 each contribute to the L-aspartate site. Asn-123 provides a ligand contact to L-citrulline. L-citrulline-binding residues include Arg-127, Ser-175, Glu-260, and Tyr-272.

It belongs to the argininosuccinate synthase family. Type 1 subfamily. Homotetramer.

It localises to the cytoplasm. It carries out the reaction L-citrulline + L-aspartate + ATP = 2-(N(omega)-L-arginino)succinate + AMP + diphosphate + H(+). It functions in the pathway amino-acid biosynthesis; L-arginine biosynthesis; L-arginine from L-ornithine and carbamoyl phosphate: step 2/3. The protein is Argininosuccinate synthase of Mycolicibacterium gilvum (strain PYR-GCK) (Mycobacterium gilvum (strain PYR-GCK)).